We begin with the raw amino-acid sequence, 283 residues long: Bifunctional protein FolD 2 (283 aa).

NADP(+)-binding positions include 165–167 (GAS), serine 190, and isoleucine 231.

This sequence belongs to the tetrahydrofolate dehydrogenase/cyclohydrolase family. In terms of assembly, homodimer.

The catalysed reaction is (6R)-5,10-methylene-5,6,7,8-tetrahydrofolate + NADP(+) = (6R)-5,10-methenyltetrahydrofolate + NADPH. It carries out the reaction (6R)-5,10-methenyltetrahydrofolate + H2O = (6R)-10-formyltetrahydrofolate + H(+). It functions in the pathway one-carbon metabolism; tetrahydrofolate interconversion. Its function is as follows. Catalyzes the oxidation of 5,10-methylenetetrahydrofolate to 5,10-methenyltetrahydrofolate and then the hydrolysis of 5,10-methenyltetrahydrofolate to 10-formyltetrahydrofolate. This Bordetella pertussis (strain Tohama I / ATCC BAA-589 / NCTC 13251) protein is Bifunctional protein FolD 2.